The sequence spans 242 residues: Ribosomal RNA large subunit methyltransferase E (242 aa).

5 residues coordinate S-adenosyl-L-methionine: Gly64, Trp66, Asp84, Asp100, and Asp125. Lys165 serves as the catalytic Proton acceptor. Residues Ser198 to Asp242 form a disordered region. Residues Gly233–Asp242 are compositionally biased toward polar residues.

This sequence belongs to the class I-like SAM-binding methyltransferase superfamily. RNA methyltransferase RlmE family.

Its subcellular location is the cytoplasm. The enzyme catalyses uridine(2552) in 23S rRNA + S-adenosyl-L-methionine = 2'-O-methyluridine(2552) in 23S rRNA + S-adenosyl-L-homocysteine + H(+). Its function is as follows. Specifically methylates the uridine in position 2552 of 23S rRNA at the 2'-O position of the ribose in the fully assembled 50S ribosomal subunit. The protein is Ribosomal RNA large subunit methyltransferase E of Verminephrobacter eiseniae (strain EF01-2).